The chain runs to 468 residues: Trehalose-binding lipoprotein LpqY (468 aa).

Positions 1 to 25 are cleaved as a signal peptide; that stretch reads MVMSRGRIPRLGAAVLVALTTAAAA. The N-palmitoyl cysteine moiety is linked to residue Cys26. Cys26 carries S-diacylglycerol cysteine lipidation. The cysteines at positions 54 and 372 are disulfide-linked. Residues Asp97, Asn151, Trp276, Phe278, Gly351, and Arg421 each coordinate alpha,alpha-trehalose.

This sequence belongs to the bacterial solute-binding protein 1 family. In terms of assembly, monomer. The complex is composed of two ATP-binding proteins (SugC), two transmembrane proteins (SugA and SugB) and a solute-binding protein (LpqY).

Its subcellular location is the cell inner membrane. Functionally, part of the ABC transporter complex LpqY-SugA-SugB-SugC, which is highly specific for uptake of trehalose. Involved in the recycling of extracellular trehalose released from trehalose-containing molecules synthesized by M.tuberculosis. Trehalose uptake is essential for virulence. This is Trehalose-binding lipoprotein LpqY (lpqY) from Mycobacterium tuberculosis (strain CDC 1551 / Oshkosh).